Here is a 478-residue protein sequence, read N- to C-terminus: PRAME family member 27 (478 aa).

One copy of the LRR 1 repeat lies at 17 to 40; the sequence is RSLLRDQALAMSTLEELPTELFPP. The stretch at 99 to 126 is one LRR 1; degenerate repeat; it reads RWKLQVLDLQDVCENFWMVWSEAMARGS. One copy of the LRR 2; degenerate repeat lies at 181-205; it reads HLCCKKLKILGMPFRNIRSILKMVN. The stretch at 206-232 is one LRR 3; degenerate repeat; it reads LDCIQEVEVNCKWVLPILTQFTPYLGH. Residues 233-268 form an LRR 4; degenerate repeat; it reads MRNLQKLVLSHMDVSRYVSPEQKKEIVTQFTTQFLK. LRR repeat units follow at residues 269 to 294, 295 to 326, 327 to 348, 351 to 378, and 379 to 403; these read LHCL…LSCL, KTSL…SQLK, TLDL…ILLE, AATL…ALSR, and CFEL…LLSH.

Belongs to the PRAME family.

This Homo sapiens (Human) protein is PRAME family member 27.